We begin with the raw amino-acid sequence, 158 residues long: 2-C-methyl-D-erythritol 2,4-cyclodiphosphate synthase (158 aa).

2 residues coordinate a divalent metal cation: Asp8 and His10. 4-CDP-2-C-methyl-D-erythritol 2-phosphate is bound by residues 8–10 (DVH) and 34–35 (HS). His42 contacts a divalent metal cation. Residues 56–58 (DIG), 61–65 (FPDTD), 100–106 (AQKPKML), 132–135 (TTEE), and Phe139 contribute to the 4-CDP-2-C-methyl-D-erythritol 2-phosphate site.

Belongs to the IspF family. In terms of assembly, homotrimer. A divalent metal cation serves as cofactor.

The enzyme catalyses 4-CDP-2-C-methyl-D-erythritol 2-phosphate = 2-C-methyl-D-erythritol 2,4-cyclic diphosphate + CMP. Its pathway is isoprenoid biosynthesis; isopentenyl diphosphate biosynthesis via DXP pathway; isopentenyl diphosphate from 1-deoxy-D-xylulose 5-phosphate: step 4/6. Involved in the biosynthesis of isopentenyl diphosphate (IPP) and dimethylallyl diphosphate (DMAPP), two major building blocks of isoprenoid compounds. Catalyzes the conversion of 4-diphosphocytidyl-2-C-methyl-D-erythritol 2-phosphate (CDP-ME2P) to 2-C-methyl-D-erythritol 2,4-cyclodiphosphate (ME-CPP) with a corresponding release of cytidine 5-monophosphate (CMP). The protein is 2-C-methyl-D-erythritol 2,4-cyclodiphosphate synthase of Clostridium beijerinckii (strain ATCC 51743 / NCIMB 8052) (Clostridium acetobutylicum).